Reading from the N-terminus, the 766-residue chain is BMP/retinoic acid-inducible neural-specific protein 3 (766 aa).

Positions methionine 1 to alanine 33 are cleaved as a signal peptide. The MACPF domain occupies arginine 74–alanine 264. 6 N-linked (GlcNAc...) asparagine glycosylation sites follow: asparagine 168, asparagine 337, asparagine 456, asparagine 562, asparagine 609, and asparagine 641.

It belongs to the BRINP family. In terms of tissue distribution, expressed in the brain. Weakly expressed in embryonic stem (ES) cells. Expressed in ES-derived neural stem cells (NSCs) and neuronal cells.

It is found in the secreted. It localises to the mitochondrion. Functionally, inhibits neuronal cell proliferation by negative regulation of the cell cycle transition. Promotes pituitary gonadotrope cell proliferation, migration and invasion, when overexpressed. May play a role in cell pituitary tumor development. In Mus musculus (Mouse), this protein is BMP/retinoic acid-inducible neural-specific protein 3 (Brinp3).